We begin with the raw amino-acid sequence, 253 residues long: Carboxy-S-adenosyl-L-methionine synthase (253 aa).

Residues Tyr-49, Gly-74 to Ser-76, Asp-98 to Asn-99, and Asn-141 contribute to the S-adenosyl-L-methionine site.

It belongs to the class I-like SAM-binding methyltransferase superfamily. Cx-SAM synthase family.

It carries out the reaction prephenate + S-adenosyl-L-methionine = carboxy-S-adenosyl-L-methionine + 3-phenylpyruvate + H2O. Functionally, catalyzes the conversion of S-adenosyl-L-methionine (SAM) to carboxy-S-adenosyl-L-methionine (Cx-SAM). The sequence is that of Carboxy-S-adenosyl-L-methionine synthase from Trichodesmium erythraeum (strain IMS101).